The following is a 1163-amino-acid chain: Protein phosphatase 1 regulatory subunit 26 (1163 aa).

A compositionally biased stretch (basic and acidic residues) spans histidine 65 to leucine 83. 7 disordered regions span residues histidine 65 to lysine 91, arginine 144 to arginine 253, arginine 266 to leucine 393, alanine 463 to serine 496, valine 514 to leucine 653, arginine 672 to alanine 929, and threonine 1073 to leucine 1163. 2 stretches are compositionally biased toward polar residues: residues histidine 163–serine 179 and aspartate 189–glutamate 201. Residues isoleucine 208–aspartate 236 show a composition bias toward basic and acidic residues. A compositionally biased stretch (polar residues) spans lysine 273–leucine 297. The segment covering methionine 315 to arginine 324 has biased composition (basic residues). Residues glycine 515–isoleucine 535 show a composition bias toward low complexity. Composition is skewed to basic and acidic residues over residues lysine 566–glutamine 581 and alanine 634–serine 645. Over residues arginine 672–arginine 682 the composition is skewed to basic residues. Residues threonine 766 to serine 780 are compositionally biased toward low complexity. Over residues serine 783–glutamate 792 the composition is skewed to acidic residues. Basic and acidic residues-rich tracts occupy residues leucine 793–arginine 808 and glutamate 850–arginine 859. A compositionally biased stretch (polar residues) spans threonine 860 to lysine 871. Over residues serine 901–arginine 910 the composition is skewed to low complexity. The span at glutamine 1105–glutamine 1131 shows a compositional bias: basic and acidic residues. Serine 1111 is modified (phosphoserine). Composition is skewed to polar residues over residues glutamine 1133–threonine 1146 and alanine 1154–leucine 1163.

In terms of assembly, interacts with UTP20 and PPP1CA.

The protein resides in the nucleus. It is found in the nucleolus. In terms of biological role, inhibits phosphatase activity of protein phosphatase 1 (PP1) complexes. May positively regulate cell proliferation. The chain is Protein phosphatase 1 regulatory subunit 26 (Ppp1r26) from Mus musculus (Mouse).